The sequence spans 192 residues: CASP-like protein 1E1 (192 aa).

A disordered region spans residues 1-22; that stretch reads MDSQNKNSVDAMDGIESRGMKE. Residues 1-29 are Cytoplasmic-facing; sequence MDSQNKNSVDAMDGIESRGMKERGGRTNS. Residues 30–50 traverse the membrane as a helical segment; that stretch reads FLVLRVLAFVLTSTAAIVHGV. Residues 51-81 are Extracellular-facing; sequence NNQTETVPIQLTSSMPPLYVPVVAKWHYLSA. An N-linked (GlcNAc...) asparagine glycan is attached at asparagine 52. Residues 82 to 102 form a helical membrane-spanning segment; the sequence is FVFFVVSNAIACSYAAISVML. Residues 103 to 118 are Cytoplasmic-facing; that stretch reads SFCGKKSMVPIILTLD. The chain crosses the membrane as a helical span at residues 119–139; the sequence is LLMVALLFSSNGAATAIGVMG. Over 140 to 161 the chain is Extracellular; that stretch reads YKGNSHVKWNKVCNVFGKFCNQ. The chain crosses the membrane as a helical span at residues 162–182; sequence VAASVVLSLIGSIVFVLLVML. Over 183 to 192 the chain is Cytoplasmic; that stretch reads TAFRLHNKSK.

This sequence belongs to the Casparian strip membrane proteins (CASP) family. Homodimer and heterodimers.

It is found in the cell membrane. In Ricinus communis (Castor bean), this protein is CASP-like protein 1E1.